The chain runs to 370 residues: Anhydro-N-acetylmuramic acid kinase (370 aa).

12 to 19 (GTSLDGVD) contacts ATP.

The protein belongs to the anhydro-N-acetylmuramic acid kinase family.

The catalysed reaction is 1,6-anhydro-N-acetyl-beta-muramate + ATP + H2O = N-acetyl-D-muramate 6-phosphate + ADP + H(+). It functions in the pathway amino-sugar metabolism; 1,6-anhydro-N-acetylmuramate degradation. It participates in cell wall biogenesis; peptidoglycan recycling. Functionally, catalyzes the specific phosphorylation of 1,6-anhydro-N-acetylmuramic acid (anhMurNAc) with the simultaneous cleavage of the 1,6-anhydro ring, generating MurNAc-6-P. Is required for the utilization of anhMurNAc either imported from the medium or derived from its own cell wall murein, and thus plays a role in cell wall recycling. In Proteus mirabilis (strain HI4320), this protein is Anhydro-N-acetylmuramic acid kinase.